A 372-amino-acid chain; its full sequence is tRNA 2-selenouridine synthase (372 aa).

Positions 17 to 140 (FLQDIPLIDV…LRNFLLTTLE (124 aa)) constitute a Rhodanese domain. Cys100 (S-selanylcysteine intermediate) is an active-site residue.

This sequence belongs to the SelU family. Monomer.

It catalyses the reaction 5-methylaminomethyl-2-thiouridine(34) in tRNA + selenophosphate + (2E)-geranyl diphosphate + H2O + H(+) = 5-methylaminomethyl-2-selenouridine(34) in tRNA + (2E)-thiogeraniol + phosphate + diphosphate. The catalysed reaction is 5-methylaminomethyl-2-thiouridine(34) in tRNA + (2E)-geranyl diphosphate = 5-methylaminomethyl-S-(2E)-geranyl-thiouridine(34) in tRNA + diphosphate. The enzyme catalyses 5-methylaminomethyl-S-(2E)-geranyl-thiouridine(34) in tRNA + selenophosphate + H(+) = 5-methylaminomethyl-2-(Se-phospho)selenouridine(34) in tRNA + (2E)-thiogeraniol. It carries out the reaction 5-methylaminomethyl-2-(Se-phospho)selenouridine(34) in tRNA + H2O = 5-methylaminomethyl-2-selenouridine(34) in tRNA + phosphate. In terms of biological role, involved in the post-transcriptional modification of the uridine at the wobble position (U34) of tRNA(Lys), tRNA(Glu) and tRNA(Gln). Catalyzes the conversion of 2-thiouridine (S2U-RNA) to 2-selenouridine (Se2U-RNA). Acts in a two-step process involving geranylation of 2-thiouridine (S2U) to S-geranyl-2-thiouridine (geS2U) and subsequent selenation of the latter derivative to 2-selenouridine (Se2U) in the tRNA chain. The protein is tRNA 2-selenouridine synthase of Serratia proteamaculans (strain 568).